The following is a 230-amino-acid chain: Cytochrome c oxidase subunit 2 (230 aa).

Residues 1 to 29 (NNFFQGYNLLFQHSLFASYMDWFHAFNCS) lie on the Mitochondrial intermembrane side of the membrane. A helical membrane pass occupies residues 30–50 (LLLGVLVFVTLLFGYLIFSTF). Over 51 to 63 (YFKSKKIEYQFGE) the chain is Mitochondrial matrix. The helical transmembrane segment at 64-84 (LLCSIFPTIILLMQMVPSLSL) threads the bilayer. The Mitochondrial intermembrane segment spans residues 85–230 (LYYYGLMNLD…FKSWCFGTME (146 aa)). Cu cation is bound by residues His163, Cys198, Glu200, Cys202, His206, and Met209. Glu200 is a binding site for Mg(2+).

This sequence belongs to the cytochrome c oxidase subunit 2 family. Component of the cytochrome c oxidase (complex IV, CIV), a multisubunit enzyme composed of a catalytic core of 3 subunits and several supernumerary subunits. The complex exists as a monomer or a dimer and forms supercomplexes (SCs) in the inner mitochondrial membrane with ubiquinol-cytochrome c oxidoreductase (cytochrome b-c1 complex, complex III, CIII). Cu cation serves as cofactor.

The protein localises to the mitochondrion inner membrane. The catalysed reaction is 4 Fe(II)-[cytochrome c] + O2 + 8 H(+)(in) = 4 Fe(III)-[cytochrome c] + 2 H2O + 4 H(+)(out). Its function is as follows. Component of the cytochrome c oxidase, the last enzyme in the mitochondrial electron transport chain which drives oxidative phosphorylation. The respiratory chain contains 3 multisubunit complexes succinate dehydrogenase (complex II, CII), ubiquinol-cytochrome c oxidoreductase (cytochrome b-c1 complex, complex III, CIII) and cytochrome c oxidase (complex IV, CIV), that cooperate to transfer electrons derived from NADH and succinate to molecular oxygen, creating an electrochemical gradient over the inner membrane that drives transmembrane transport and the ATP synthase. Cytochrome c oxidase is the component of the respiratory chain that catalyzes the reduction of oxygen to water. Electrons originating from reduced cytochrome c in the intermembrane space (IMS) are transferred via the dinuclear copper A center (CU(A)) of subunit 2 and heme A of subunit 1 to the active site in subunit 1, a binuclear center (BNC) formed by heme A3 and copper B (CU(B)). The BNC reduces molecular oxygen to 2 water molecules using 4 electrons from cytochrome c in the IMS and 4 protons from the mitochondrial matrix. The polypeptide is Cytochrome c oxidase subunit 2 (cox-2) (Caenorhabditis remanei (Caenorhabditis vulgaris)).